The following is a 315-amino-acid chain: Phosphomutase-like protein 3 (315 aa).

Positions Met1 to Thr19 are cleaved as a signal peptide. The Tele-phosphohistidine intermediate role is filled by His77. Residues Asn88 and Asn154 are each glycosylated (N-linked (GlcNAc...) asparagine). Glu173 (proton donor/acceptor) is an active-site residue. Asn185 carries an N-linked (GlcNAc...) asparagine glycan. Asn286 is lipidated: GPI-anchor amidated asparagine. Residues Asp287–Ala315 constitute a propeptide, removed in mature form.

Belongs to the phosphoglycerate mutase family.

It localises to the cell membrane. The protein is Phosphomutase-like protein 3 (PGA12) of Candida albicans (strain SC5314 / ATCC MYA-2876) (Yeast).